Reading from the N-terminus, the 463-residue chain is Ammonium transporter 1 (463 aa).

The Extracellular segment spans residues 1-39 (MVAGEIIKGVAAEITNGSSSSVVQKYLDCANQVAPDPGN). Residues 40–60 (TTWVLLSTILVLGMMPALAFF) traverse the membrane as a helical segment. Residues 61–76 (EAGLLRSKNTLSIITQ) are Cytoplasmic-facing. A helical transmembrane segment spans residues 77-97 (IMSGIVVLTVMWQAFGYSLTF). The Extracellular portion of the chain corresponds to 98–127 (GPDQKGIIGNLDHAFLINVSYDDCSPNAPN). A helical membrane pass occupies residues 128–148 (IPAAAYAFFMMMFANITPLLM). The Cytoplasmic segment spans residues 149 to 160 (TGAFAERVKFKA). The chain crosses the membrane as a helical span at residues 161–181 (FIALTVAWEIIVFYPVAHWIW). Over 182–194 (GGGWLHKYFGVLD) the chain is Extracellular. The chain crosses the membrane as a helical span at residues 195 to 215 (FAGGIVIHTSAGVSALVIALY). Topologically, residues 216–233 (VGRRKDFEKYGGEFPPSN) are cytoplasmic. Residues 234–254 (LPLATIGAALLWMGWFGFNAG) form a helical membrane-spanning segment. Residues 255-265 (SALAAGNIATS) lie on the Extracellular side of the membrane. The chain crosses the membrane as a helical span at residues 266–286 (AVASTQIGGSFSAIVWIILSA). The Cytoplasmic portion of the chain corresponds to 287-293 (AKGKPNT). A helical membrane pass occupies residues 294 to 314 (VSVINGVIAGLAGITPASGYI). Over 315 to 316 (NS) the chain is Extracellular. A helical membrane pass occupies residues 317–337 (QYSIGLGICLGLASYYSVVLL). The Cytoplasmic portion of the chain corresponds to 338–351 (KHKLHIDDALDVSS). The helical transmembrane segment at 352–372 (VHGLTGIIGSLAIGFCAELSV) threads the bilayer. At 373–392 (NPNGANGAFYGNPKLIGTQL) the chain is on the extracellular side. The chain crosses the membrane as a helical span at residues 393–413 (LGVVSVAVWAAAWTWVLLKII). Topologically, residues 414 to 463 (DATIGVKIDESEEELGLDLVEHGEFAYHNISLQGNENHYSSVINSHDFFK) are cytoplasmic.

It belongs to the ammonia transporter channel (TC 1.A.11.2) family.

The protein resides in the cell membrane. Its subcellular location is the endosome membrane. It localises to the lysosome membrane. The protein localises to the cytoplasmic vesicle. It is found in the phagosome membrane. Ammonium transporter that mediates the excretion of ammonium. Controls ammonium homeostasis during growth and development. Ammonium has been shown to function as a morphogen at multiple steps during the development. The chain is Ammonium transporter 1 (amtA) from Dictyostelium discoideum (Social amoeba).